A 548-amino-acid polypeptide reads, in one-letter code: Membrane protein insertase YidC (548 aa).

The chain crosses the membrane as a helical span at residues 6–26 (NLLVIALLFVSFMIWQAWEQD). The tract at residues 28 to 55 (NPQPQAQQTTQTTTTAAGSAADQGVPAS) is disordered. Residues 30-50 (QPQAQQTTQTTTTAAGSAADQ) show a composition bias toward low complexity. The next 4 membrane-spanning stretches (helical) occupy residues 350–370 (FVGN…GIMY), 420–440 (LGGC…YYML), 458–478 (LSAQ…MFFI), and 499–519 (PVIF…YYIV).

It belongs to the OXA1/ALB3/YidC family. Type 1 subfamily. Interacts with the Sec translocase complex via SecD. Specifically interacts with transmembrane segments of nascent integral membrane proteins during membrane integration.

The protein localises to the cell inner membrane. Its function is as follows. Required for the insertion and/or proper folding and/or complex formation of integral membrane proteins into the membrane. Involved in integration of membrane proteins that insert both dependently and independently of the Sec translocase complex, as well as at least some lipoproteins. Aids folding of multispanning membrane proteins. The sequence is that of Membrane protein insertase YidC from Escherichia coli O127:H6 (strain E2348/69 / EPEC).